The following is a 381-amino-acid chain: Guanine nucleotide-binding protein G(olf) subunit alpha (381 aa).

The segment at 1–25 is disordered; the sequence is MGCLGNSSKTAEDQGVDEKERREAN. Gly2 is lipidated: N-palmitoyl glycine. Residue Cys3 is the site of S-palmitoyl cysteine attachment. A compositionally biased stretch (basic and acidic residues) spans 10-25; the sequence is TAEDQGVDEKERREAN. The G-alpha domain occupies 41 to 381; sequence ATHRLLLLGA…RMHLKQYELL (341 aa). Residues 44 to 57 are G1 motif; that stretch reads RLLLLGAGESGKST. GTP is bound by residues Glu52, Ser53, Gly54, Lys55, Ser56, and Thr57. Ser56 is a Mg(2+) binding site. Thr178 carries the phosphothreonine modification. The interval 183 to 191 is G2 motif; that stretch reads DLLRCRVLT. GTP contacts are provided by Leu185, Arg186, and Thr191. Mg(2+)-binding residues include Thr191 and Asp210. The interval 206 to 215 is G3 motif; that stretch reads FHMFDVGGQR. Residues Gly213, Asn279, Lys280, Asp282, and Ala353 each contribute to the GTP site. Positions 275-282 are G4 motif; it reads ILFLNKQD. Residues 351-356 are G5 motif; sequence TCAVDT.

It belongs to the G-alpha family. G(s) subfamily. As to quaternary structure, g proteins are composed of 3 units; alpha, beta and gamma. The alpha chain contains the guanine nucleotide binding site. Interacts with GAS2L2. Interacts (GDP-bound form) with RIC8B (via C-terminus); promoting GNAL folding and association with the plasma membrane.

The protein localises to the cell membrane. It catalyses the reaction GTP + H2O = GDP + phosphate + H(+). In terms of biological role, guanine nucleotide-binding protein (G protein) involved as transducer in olfactory signal transduction controlled by G protein-coupled receptors (GPCRs). Contains the guanine nucleotide binding site and alternates between an active, GTP-bound state and an inactive, GDP-bound state. Signaling by an activated GPCR promotes GDP release and GTP binding. The alpha subunit has a low GTPase activity that converts bound GTP to GDP, thereby terminating the signal. Both GDP release and GTP hydrolysis are modulated by numerous regulatory proteins. GNAL/G(olf) alpha specifically mediates olfactory signal transduction within the olfactory neuroepithelium and the basal ganglia following GPCRs activation. Acts by promoting the specific activation of adenylyl cyclase ADCY3, resulting in increased levels of the signaling molecule cAMP. The sequence is that of Guanine nucleotide-binding protein G(olf) subunit alpha from Rattus norvegicus (Rat).